The sequence spans 218 residues: MTTTFERQVKGLLGTKLGMTQVWDENGKFVPVTVVKADSNVVTQLRNTDKDGYNAVQIGFGAIDPRKVTKPLAGHFAAAGVTPRRHVVELRTSDAAEYELGQELSVELFEAGAKVDVVGTTKGKGTAGVMKRHGFSGVGASHGAHKNHRKPGSIGGASYPARVFKGMRMAGRMGNARHTTMNLTVHAVDAENSLLLIKGALPGPKGSVVLVRSTVKGA.

The tract at residues 137-157 is disordered; the sequence is GVGASHGAHKNHRKPGSIGGA.

It belongs to the universal ribosomal protein uL3 family. As to quaternary structure, part of the 50S ribosomal subunit. Forms a cluster with proteins L14 and L19.

In terms of biological role, one of the primary rRNA binding proteins, it binds directly near the 3'-end of the 23S rRNA, where it nucleates assembly of the 50S subunit. This is Large ribosomal subunit protein uL3 from Kocuria rhizophila (strain ATCC 9341 / DSM 348 / NBRC 103217 / DC2201).